Consider the following 154-residue polypeptide: uncharacterized protein (154 aa).

Positions 91 to 154 are disordered; the sequence is PSEESWGCRQ…WGSPQPSRGA (64 aa). Residues 134 to 154 show a composition bias toward polar residues; it reads SRDTSPLGGQSWGSPQPSRGA.

This is an uncharacterized protein from Homo sapiens (Human).